The following is a 124-amino-acid chain: Ragulator complex protein LAMTOR3 homolog (124 aa).

The protein belongs to the LAMTOR3 family. As to quaternary structure, part of the Ragulator complex composed of Lamtor3, Lamtor2, CG14184, CG14812, and Lamtor4.

Regulator of the TOR pathway, a signaling cascade that promotes cell growth in response to growth factors, energy levels, and amino acids. As part of the Ragulator complex, may activate the TOR signaling cascade in response to amino acids. The polypeptide is Ragulator complex protein LAMTOR3 homolog (Drosophila melanogaster (Fruit fly)).